The following is a 138-amino-acid chain: Small ribosomal subunit protein uS11c (138 aa).

The tract at residues 1-22 is disordered; that stretch reads MAKAIPKISSRRNGRIGSRKGA. A compositionally biased stretch (basic residues) spans 9–22; that stretch reads SSRRNGRIGSRKGA.

The protein belongs to the universal ribosomal protein uS11 family. Part of the 30S ribosomal subunit.

The protein resides in the plastid. It is found in the chloroplast. This Nicotiana tabacum (Common tobacco) protein is Small ribosomal subunit protein uS11c.